A 112-amino-acid polypeptide reads, in one-letter code: Secretoglobin family 2B member 24 (112 aa).

An N-terminal signal peptide occupies residues 1-23 (MKGTLLLLALLMIGELGFHTTEA).

This sequence belongs to the secretoglobin family. Expressed in lacrimal gland, at higher level in males than females.

It is found in the secreted. The protein is Secretoglobin family 2B member 24 (Scgb2b24) of Mus musculus (Mouse).